Consider the following 213-residue polypeptide: Motile sperm domain-containing protein 1 (213 aa).

The MSP domain maps to 16 to 143; the sequence is PVFVFPTELI…KEHLTESLFF (128 aa). 2 consecutive transmembrane segments (helical) span residues 159–179 and 191–211; these read SLLTVFLGVVCIAALMLPTLG and LSVNQKLVAAYILGLITMAIL. Positions 205-208 match the Nuclear export signal motif; the sequence is LITM.

It is found in the endoplasmic reticulum membrane. The protein localises to the golgi apparatus membrane. Functionally, plays a role in differentiation and/or proliferation of mesenchymal stem cells. Proposed to be involved in epithelial-to-mesenchymal transition (EMT). However, another study suggests that it is not required for EMT or stem cell self-renewal and acts during later stages of differentiation. The chain is Motile sperm domain-containing protein 1 (MOSPD1) from Homo sapiens (Human).